Consider the following 357-residue polypeptide: IGF-like family receptor 1 (357 aa).

An N-terminal signal peptide occupies residues 1-22; sequence MGPLRLLPTAVLLLAQAAPWEA. Residues 23–160 are Extracellular-facing; it reads SQHCGRLEYW…HKAPQQAWPS (138 aa). The segment at 100 to 147 is disordered; it reads IPSGSRGGTGRPCREPVPNKEPCPLTPGKSSILSSQEPSSPGIPSVSW. A compositionally biased stretch (low complexity) spans 129–139; it reads SSILSSQEPSS. A helical transmembrane segment spans residues 161–181; the sequence is LSFALFLVLVLLVTSAIILLA. The Cytoplasmic portion of the chain corresponds to 182–357; the sequence is LQRHHRRLDQ…KLGSSGACLA (176 aa).

It localises to the cell membrane. Probable cell membrane receptor for the IGF-like family protein IGFL. The sequence is that of IGF-like family receptor 1 (IGFLR1) from Bos taurus (Bovine).